A 123-amino-acid chain; its full sequence is Snaclec GPIB-binding protein subunit beta (123 aa).

Intrachain disulfides connect cysteine 2–cysteine 13, cysteine 30–cysteine 119, and cysteine 96–cysteine 111. In terms of domain architecture, C-type lectin spans 9-120; the sequence is YGGHCYKLFK…CTRLQYFVCE (112 aa).

It belongs to the snaclec family. In terms of assembly, heterodimer of subunits alpha and beta; disulfide-linked. In terms of tissue distribution, expressed by the venom gland.

It is found in the secreted. In terms of biological role, binds to platelet GPIb (subunit alpha) (GP1BA) and functions as a receptor blocker for vWF binding to GPIb. The platelet GPIb-binding site resides on the GPIB-BP subunit beta and not on the alpha subunit. At a final concentration of 104 nM totally abolishes vWF-dependent shear-induced platelet aggregation (SIPA) at a high shear stress, but had no effect on SIPA at a low shear stress. In Bothrops jararaca (Jararaca), this protein is Snaclec GPIB-binding protein subunit beta.